The chain runs to 420 residues: Isocitrate dehydrogenase [NADP] (420 aa).

NADP(+)-binding positions include 75 to 77 (TIT) and arginine 82. Threonine 77 is a substrate binding site. Residues 94-100 (SPNGTIR), arginine 109, and arginine 132 contribute to the substrate site. A Mn(2+)-binding site is contributed by aspartate 252. Lysine 260 contributes to the NADP(+) binding site. Aspartate 275 provides a ligand contact to Mn(2+). NADP(+) is bound by residues 310 to 315 (GTVTRH) and asparagine 328.

This sequence belongs to the isocitrate and isopropylmalate dehydrogenases family. Mg(2+) is required as a cofactor. It depends on Mn(2+) as a cofactor.

The catalysed reaction is D-threo-isocitrate + NADP(+) = 2-oxoglutarate + CO2 + NADPH. May function in the production of NADPH for fatty acid and sterol synthesis. The protein is Isocitrate dehydrogenase [NADP] (IDP3) of Saccharomyces cerevisiae (strain ATCC 204508 / S288c) (Baker's yeast).